Here is a 487-residue protein sequence, read N- to C-terminus: Serine/threonine-protein kinase 4 (487 aa).

The residue at position 1 (Met1) is an N-acetylmethionine. At Thr3 the chain carries Phosphothreonine. The region spanning 30-281 (FDVLEKLGEG…ATQLLQHPFV (252 aa)) is the Protein kinase domain. ATP contacts are provided by residues 36-44 (LGEGSYGSV) and Lys59. The active-site Proton acceptor is the Asp149. The residue at position 183 (Thr183) is a Phosphothreonine; by autocatalysis. The residue at position 265 (Ser265) is a Phosphoserine. A coiled-coil region spans residues 290–310 (LRDLINEAMDVKLKRQEAQQR). Residues 305 to 337 (QEAQQREVDQDDEENSEEDELDSGTMVRAVGDE) form a disordered region. A compositionally biased stretch (acidic residues) spans 313–326 (DQDDEENSEEDELD). Position 320 is a phosphoserine (Ser320). Residues Thr340 and Thr367 each carry the phosphothreonine modification. Thr387 is modified (phosphothreonine; by PKB/AKT1). 2 positions are modified to phosphoserine: Ser410 and Ser414. Tyr433 carries the post-translational modification Phosphotyrosine. An SARAH domain is found at 433–480 (YEFLKSWTVEDLQKRLLALDPMMEQEIEEIRQKYQSKRQPILDAIEAK).

The protein belongs to the protein kinase superfamily. STE Ser/Thr protein kinase family. STE20 subfamily. In terms of assembly, homodimer; mediated via the coiled-coil region. Interacts with NORE1, which inhibits autoactivation. Interacts with and stabilizes SAV1. Interacts with RASSF1. Interacts with FOXO3. Interacts with RASSF2 (via SARAH domain). Interacts with AR, PKB/AKT1, TNNI3 and SIRT1. Interacts with DLG5 (via PDZ domain 3). Interacts with MARK3 and SCRIB in the presence of DLG5. Mg(2+) is required as a cofactor. In terms of processing, autophosphorylated on serine and threonine residues. Phosphorylation at Thr-387 by PKB/AKT1, leads to inhibition of its: kinase activity, nuclear translocation and autophosphorylation at Thr-183. It also diminishes its cleavage by caspases and its ability to phosphorylate FOXO3. Post-translationally, proteolytically cleaved by caspase-3 during apoptosis at Asp-326 and Asp-349 resulting in a 37 kDa or a 39 kDa subunit respectively. The 39 kDa subunit is further cleaved into the 37 kDa form. Proteolytic cleavage results in kinase activation and nuclear translocation of the truncated form (MST1/N). It is less likely that cleavage at Asp-349 is a prerequisite for activation as this site is not conserved in the murine ortholog.

It localises to the cytoplasm. It is found in the nucleus. It carries out the reaction L-seryl-[protein] + ATP = O-phospho-L-seryl-[protein] + ADP + H(+). The catalysed reaction is L-threonyl-[protein] + ATP = O-phospho-L-threonyl-[protein] + ADP + H(+). Inhibited by the C-terminal non-catalytic region. Activated by caspase-cleavage. Full activation also requires homodimerization and autophosphorylation of Thr-183. Activated by RASSF1 which acts by preventing its dephosphorylation. Its function is as follows. Stress-activated, pro-apoptotic kinase which, following caspase-cleavage, enters the nucleus and induces chromatin condensation followed by internucleosomal DNA fragmentation. Key component of the Hippo signaling pathway which plays a pivotal role in organ size control and tumor suppression by restricting proliferation and promoting apoptosis. The core of this pathway is composed of a kinase cascade wherein STK3/MST2 and STK4/MST1, in complex with its regulatory protein SAV1, phosphorylates and activates LATS1/2 in complex with its regulatory protein MOB1, which in turn phosphorylates and inactivates YAP1 oncoprotein and WWTR1/TAZ. Phosphorylation of YAP1 by LATS2 inhibits its translocation into the nucleus to regulate cellular genes important for cell proliferation, cell death, and cell migration. STK3/MST2 and STK4/MST1 are required to repress proliferation of mature hepatocytes, to prevent activation of facultative adult liver stem cells (oval cells), and to inhibit tumor formation. Phosphorylates 'Ser-14' of histone H2B (H2BS14ph) during apoptosis. Phosphorylates FOXO3 upon oxidative stress, which results in its nuclear translocation and cell death initiation. Phosphorylates MOBKL1A, MOBKL1B and RASSF2. Phosphorylates TNNI3 (cardiac Tn-I) and alters its binding affinity to TNNC1 (cardiac Tn-C) and TNNT2 (cardiac Tn-T). Phosphorylates FOXO1 on 'Ser-212' and regulates its activation and stimulates transcription of PMAIP1 in a FOXO1-dependent manner. Phosphorylates SIRT1 and inhibits SIRT1-mediated p53/TP53 deacetylation, thereby promoting p53/TP53 dependent transcription and apoptosis upon DNA damage. Acts as an inhibitor of PKB/AKT1. Phosphorylates AR on 'Ser-650' and suppresses its activity by intersecting with PKB/AKT1 signaling and antagonizing formation of AR-chromatin complexes. In Otolemur garnettii (Small-eared galago), this protein is Serine/threonine-protein kinase 4 (STK4).